A 151-amino-acid chain; its full sequence is Small ribosomal subunit protein uS13m (151 aa).

Belongs to the universal ribosomal protein uS13 family. Component of the mitochondrial small ribosomal subunit (mt-SSU). Mature yeast 74S mitochondrial ribosomes consist of a small (37S) and a large (54S) subunit. The 37S small subunit contains a 15S ribosomal RNA (15S mt-rRNA) and at least 32 different proteins. The 54S large subunit contains a 21S rRNA (21S mt-rRNA) and at least 45 different proteins.

The protein localises to the mitochondrion. Functionally, component of the mitochondrial ribosome (mitoribosome), a dedicated translation machinery responsible for the synthesis of mitochondrial genome-encoded proteins, including at least some of the essential transmembrane subunits of the mitochondrial respiratory chain. The mitoribosomes are attached to the mitochondrial inner membrane and translation products are cotranslationally integrated into the membrane. In Schizosaccharomyces pombe (strain 972 / ATCC 24843) (Fission yeast), this protein is Small ribosomal subunit protein uS13m (sws2).